Reading from the N-terminus, the 214-residue chain is tRNA (guanine-N(7)-)-methyltransferase (214 aa).

Residues E43, E68, D95, and D117 each coordinate S-adenosyl-L-methionine. The active site involves D117. Residues K121, D153, and 190 to 193 (TEYE) contribute to the substrate site.

The protein belongs to the class I-like SAM-binding methyltransferase superfamily. TrmB family.

The catalysed reaction is guanosine(46) in tRNA + S-adenosyl-L-methionine = N(7)-methylguanosine(46) in tRNA + S-adenosyl-L-homocysteine. Its pathway is tRNA modification; N(7)-methylguanine-tRNA biosynthesis. In terms of biological role, catalyzes the formation of N(7)-methylguanine at position 46 (m7G46) in tRNA. The sequence is that of tRNA (guanine-N(7)-)-methyltransferase from Staphylococcus aureus (strain JH1).